The following is a 531-amino-acid chain: Efflux pump terG (531 aa).

Polar residues predominate over residues 1–11 (MSSSTLEGQET). Residues 1 to 27 (MSSSTLEGQETASHHSKNSPSRHGDDG) are disordered. 13 helical membrane-spanning segments follow: residues 86 to 106 (GKLS…ILIG), 117 to 137 (AIFV…GVSV), 145 to 165 (ILAR…ALAI), 179 to 199 (FAWF…FGPL), 207 to 227 (WIYW…IVAI), 249 to 269 (IDLL…FAWN), 280 to 300 (YVYV…YVEL), 319 to 339 (FVFG…FYVI), 351 to 371 (IQMA…ALIV), 380 to 400 (ASSI…LMAL), 402 to 422 (PVHS…TFAM), 447 to 467 (SVIM…AGTI), and 488 to 508 (TLWF…IFLL).

The protein belongs to the major facilitator superfamily.

Its subcellular location is the cell membrane. Efflux pump that might be required for efficient secretion of terrein or other secondary metabolies produced by the terrein genne cluster. This Aspergillus terreus (strain NIH 2624 / FGSC A1156) protein is Efflux pump terG.